A 387-amino-acid polypeptide reads, in one-letter code: 3-ketoacyl-CoA thiolase (387 aa).

Residue Cys-91 is the Acyl-thioester intermediate of the active site. Residues His-343 and Cys-373 each act as proton acceptor in the active site.

The protein belongs to the thiolase-like superfamily. Thiolase family. As to quaternary structure, heterotetramer of two alpha chains (FadB) and two beta chains (FadA).

It is found in the cytoplasm. It catalyses the reaction an acyl-CoA + acetyl-CoA = a 3-oxoacyl-CoA + CoA. It participates in lipid metabolism; fatty acid beta-oxidation. Catalyzes the final step of fatty acid oxidation in which acetyl-CoA is released and the CoA ester of a fatty acid two carbons shorter is formed. The polypeptide is 3-ketoacyl-CoA thiolase (Salmonella paratyphi A (strain ATCC 9150 / SARB42)).